The primary structure comprises 197 residues: Small ribosomal subunit protein uS4c (197 aa).

The S4 RNA-binding domain occupies 82-143 (MRLDNILFRL…KQRSKALIQN (62 aa)).

The protein belongs to the universal ribosomal protein uS4 family. In terms of assembly, part of the 30S ribosomal subunit. Contacts protein S5. The interaction surface between S4 and S5 is involved in control of translational fidelity.

The protein resides in the plastid. It is found in the chloroplast. In terms of biological role, one of the primary rRNA binding proteins, it binds directly to 16S rRNA where it nucleates assembly of the body of the 30S subunit. Its function is as follows. With S5 and S12 plays an important role in translational accuracy. This is Small ribosomal subunit protein uS4c (rps4) from Gladiolus papilio (Goldblotch gladiolus).